The chain runs to 1119 residues: MTAAAASNWGLITNIVNSIVGVSVLTMPFCFKQCGIVLGALLLVFCSWMTHQSCMFLVKSASLSKRRTYAGLAFHAYGKAGKMLVETSMIGLMLGTCIAFYVVIGDLGSNFFARLFGFQVGGTFRMFLLFAVSLCIVLPLSLQRNMMASIQSFSAMALLFYTVFMFVIVLSSLKHGLFSGQWLRRVSYVRWEGVFRCIPIFGMSFACQSQVLPTYDSLDEPSVKTMSSIFASSLNVVTTFYVMVGFFGYVSFTEATAGNVLMHFPSNLVTEMLRVGFMMSVAVGFPMMILPCRQALSTLLCEQQQKDGTFAAGGYMPPLRFKALTLSVVFGTMVGGILIPNVETILGLTGATMGSLICFICPALIYKKIHKNALSSQVVLWVGLGVLVVSTVTTLSVSEEVPEDLAEEAPGGRLGEAEGLMKVEAARLSAQDPVVAVAEDGREKPKLPKEREELEQAQIKGPVDVPGREDGKEAPEEAQLDRPGQGIAVPVGEAHRHEPPVPHDKVVVDEGQDREVPEENKPPSRHAGGKAPGVQGQMAPPLPDSEREKQEPEQGEVGKRPGQAQALEEAGDLPEDPQKVPEADGQPAVQPAKEDLGPGDRGLHPRPQAVLSEQQNGLAVGGGEKAKGGPPPGNAAGDTGQPAEDSDHGGKPPLPAEKPAPGPGLPPEPREQRDVERAGGNQAASQLEEAGRAEMLDHAVLLQVIKEQQVQQKRLLDQQEKLLAVIEEQHKEIHQQRQEDEEDKPRQVEVHQEPGAAVPRGQEAPEGKARETVENLPPLPLDPVLRAPGGRPAPSQDLNQRSLEHSEGPVGRDPAGPPDGGPDTEPRAAQAKLRDGQKDAAPRAAGTVKELPKGPEQVPVPDPAREAGGPEERLAEEFPGQSQDVTGGSQDRKKPGKEVAATGTSILKEANWLVAGPGAETGDPRMKPKQVSRDLGLAADLPGGAEGAAAQPQAVLRQPELRVISDGEQGGQQGHRLDHGGHLEMRKARGGDHVPVSHEQPRGGEDAAVQEPRQRPEPELGLKRAVPGGQRPDNAKPNRDLKLQAGSDLRRRRRDLGPHAEGQLAPRDGVIIGLNPLPDVQVNDLRGALDAQLRQAAGGALQVVHSRQLRQAPGPPEES.

10 helical membrane-spanning segments follow: residues 4–24 (AAAS…GVSV), 36–58 (IVLG…MFLV), 84–104 (LVET…YVVI), 120–140 (VGGT…VLPL), 153–173 (FSAM…LSSL), 229–249 (IFAS…FFGY), 272–292 (MLRV…ILPC), 323–343 (ALTL…PNVE), 345–365 (ILGL…PALI), and 378–398 (VVLW…LSVS). Disordered regions lie at residues 438–691 (AEDG…EEAG) and 731–1071 (KEIH…DGVI). Composition is skewed to basic and acidic residues over residues 439–454 (EDGR…REEL), 466–475 (PGREDGKEAP), 493–522 (EAHR…ENKP), 544–559 (DSER…EVGK), and 592–603 (AKEDLGPGDRGL). Phosphoserine is present on S612. Residues 652 to 667 (PPLPAEKPAPGPGLPP) show a composition bias toward pro residues. Basic and acidic residues-rich tracts occupy residues 668–677 (EPREQRDVER), 731–752 (KEIH…EVHQ), and 763–773 (EAPEGKARETV). At T772 the chain carries Phosphothreonine. S802 bears the Phosphoserine mark. Composition is skewed to basic and acidic residues over residues 832–841 (KLRDGQKDAA) and 863–876 (PARE…RLAE). Residues 880 to 889 (GQSQDVTGGS) are compositionally biased toward polar residues. Phosphoserine is present on residues S889, S965, and S997. Basic and acidic residues-rich tracts occupy residues 975-1005 (HRLD…RGGE), 1012-1022 (PRQRPEPELGL), and 1033-1042 (DNAKPNRDLK).

This sequence belongs to the amino acid/polyamine transporter 2 family.

It localises to the membrane. The catalysed reaction is L-glutamate(out) = L-glutamate(in). The enzyme catalyses L-glutamine(out) = L-glutamine(in). It catalyses the reaction L-alanine(in) = L-alanine(out). It carries out the reaction L-serine(in) = L-serine(out). The catalysed reaction is L-leucine(in) = L-leucine(out). Its function is as follows. Facilitates bidirectional transport of amino acids. May act as a glutamate sensor that regulates glutamate-glutamine cycle and mTOR signaling in the brain. The transport mechanism remains to be elucidated. The sequence is that of Solute carrier family 38 member 10 from Homo sapiens (Human).